A 509-amino-acid chain; its full sequence is NAD-dependent histone deacetylase SIR2 (509 aa).

Residues 1–35 (MIISRGSHVDEEPVAKKPRISVGEMTDDTTDDGLN) are disordered. The span at 25–35 (MTDDTTDDGLN) shows a compositional bias: acidic residues. In terms of domain architecture, Deacetylase sirtuin-type spans 185–476 (RLSNFYTIDH…TVVAQKCEWD (292 aa)). Residues 210–229 (GAGV…EGFY) and 292–295 (QNID) each bind NAD(+). The active-site Proton acceptor is His-312. Residues Cys-320, Cys-323, Cys-344, and Cys-347 each contribute to the Zn(2+) site. NAD(+) is bound by residues 420 to 422 (GTS), 445 to 447 (NKD), and Cys-462.

It belongs to the sirtuin family. Class I subfamily. Zn(2+) serves as cofactor.

It localises to the nucleus. It carries out the reaction N(6)-acetyl-L-lysyl-[protein] + NAD(+) + H2O = 2''-O-acetyl-ADP-D-ribose + nicotinamide + L-lysyl-[protein]. Its function is as follows. NAD-dependent deacetylase. Heterochromatin component that silences transcription at silent mating loci, telomeres and the ribosomal DNA, and that also suppresses recombination in the rDNA and extends replicative life span. It acts as a NAD-dependent histone deacetylase, which deacetylates 'Lys-9' and 'Lys-14' of Histone H3 and 'Lys-16' of Histone H4. This chain is NAD-dependent histone deacetylase SIR2 (SIR2), found in Candida glabrata (strain ATCC 2001 / BCRC 20586 / JCM 3761 / NBRC 0622 / NRRL Y-65 / CBS 138) (Yeast).